The sequence spans 209 residues: MADTKEIKRVLLGPLLDNNPIALQVLGVCSALAVTTKLETALVMTIAVTLVTAFSNFFISLIRNYIPGSVRIIVQMAIIASLVIVVDQVLQAYAYEISKQLSVFVGLIITNCIVMGRAEAYAMKSPPIESFMDGIGNGLGYGVILILVGFLRELFGSGKLFGITVMESIQNGGWYQPNGLFLLAPSAFFIIGLLIWGLRTLKPAQVEED.

5 consecutive transmembrane segments (helical) span residues 42–62 (LVMTIAVTLVTAFSNFFISLI), 66–86 (IPGSVRIIVQMAIIASLVIVV), 103–123 (VFVGLIITNCIVMGRAEAYAM), 131–151 (FMDGIGNGLGYGVILILVGFL), and 178–198 (NGLFLLAPSAFFIIGLLIWGL).

Belongs to the NqrDE/RnfAE family. As to quaternary structure, composed of six subunits; NqrA, NqrB, NqrC, NqrD, NqrE and NqrF.

The protein localises to the cell inner membrane. The catalysed reaction is a ubiquinone + n Na(+)(in) + NADH + H(+) = a ubiquinol + n Na(+)(out) + NAD(+). NQR complex catalyzes the reduction of ubiquinone-1 to ubiquinol by two successive reactions, coupled with the transport of Na(+) ions from the cytoplasm to the periplasm. NqrA to NqrE are probably involved in the second step, the conversion of ubisemiquinone to ubiquinol. This chain is Na(+)-translocating NADH-quinone reductase subunit D, found in Proteus mirabilis (strain HI4320).